Here is a 386-residue protein sequence, read N- to C-terminus: DNA replication and repair protein RecF (386 aa).

Residue 30-37 (GANAQGKT) coordinates ATP.

The protein belongs to the RecF family.

It localises to the cytoplasm. Its function is as follows. The RecF protein is involved in DNA metabolism; it is required for DNA replication and normal SOS inducibility. RecF binds preferentially to single-stranded, linear DNA. It also seems to bind ATP. This chain is DNA replication and repair protein RecF, found in Natranaerobius thermophilus (strain ATCC BAA-1301 / DSM 18059 / JW/NM-WN-LF).